The following is a 134-amino-acid chain: S-protein homolog 18 (134 aa).

A signal peptide spans 1 to 25 (MCPSSFRLILSVILIAFLFVGLCEA). Asn-87 carries an N-linked (GlcNAc...) asparagine glycan.

The protein belongs to the plant self-incompatibility (S1) protein family.

The protein resides in the secreted. This Arabidopsis thaliana (Mouse-ear cress) protein is S-protein homolog 18.